We begin with the raw amino-acid sequence, 197 residues long: Phosphoheptose isomerase (197 aa).

An SIS domain is found at 34–196; the sequence is MVNCLLGGNK…DRTLFPQDEQ (163 aa). 49–51 is a binding site for substrate; it reads NGG. Zn(2+) is bound by residues histidine 58 and glutamate 62. Substrate is bound by residues glutamate 62, 91-92, 117-119, serine 122, and glutamine 172; these read ND and STS. Positions 172 and 180 each coordinate Zn(2+).

It belongs to the SIS family. GmhA subfamily. Homotetramer. Zn(2+) is required as a cofactor.

It is found in the cytoplasm. It catalyses the reaction 2 D-sedoheptulose 7-phosphate = D-glycero-alpha-D-manno-heptose 7-phosphate + D-glycero-beta-D-manno-heptose 7-phosphate. The protein operates within carbohydrate biosynthesis; D-glycero-D-manno-heptose 7-phosphate biosynthesis; D-glycero-alpha-D-manno-heptose 7-phosphate and D-glycero-beta-D-manno-heptose 7-phosphate from sedoheptulose 7-phosphate: step 1/1. Catalyzes the isomerization of sedoheptulose 7-phosphate in D-glycero-D-manno-heptose 7-phosphate. The protein is Phosphoheptose isomerase of Shewanella pealeana (strain ATCC 700345 / ANG-SQ1).